Consider the following 393-residue polypeptide: Acetate kinase (393 aa).

N7 serves as a coordination point for Mg(2+). K14 contacts ATP. R87 serves as a coordination point for substrate. D144 acts as the Proton donor/acceptor in catalysis. ATP contacts are provided by residues 202 to 206 (HIGNG), 277 to 279 (DLR), and 326 to 330 (GVGEN). Residue E380 coordinates Mg(2+).

It belongs to the acetokinase family. As to quaternary structure, homodimer. It depends on Mg(2+) as a cofactor. Requires Mn(2+) as cofactor.

The protein resides in the cytoplasm. It catalyses the reaction acetate + ATP = acetyl phosphate + ADP. It participates in metabolic intermediate biosynthesis; acetyl-CoA biosynthesis; acetyl-CoA from acetate: step 1/2. In terms of biological role, catalyzes the formation of acetyl phosphate from acetate and ATP. Can also catalyze the reverse reaction. The chain is Acetate kinase from Mycoplasmopsis pulmonis (strain UAB CTIP) (Mycoplasma pulmonis).